The sequence spans 436 residues: GTPase Der (436 aa).

2 consecutive EngA-type G domains span residues proline 4–serine 167 and isoleucine 175–asparagine 351. GTP-binding positions include glycine 10–serine 17, aspartate 57–isoleucine 61, asparagine 119–aspartate 122, glycine 181–serine 188, aspartate 229–methionine 233, and asparagine 294–aspartate 297. The KH-like domain occupies leucine 352–lysine 436.

The protein belongs to the TRAFAC class TrmE-Era-EngA-EngB-Septin-like GTPase superfamily. EngA (Der) GTPase family. As to quaternary structure, associates with the 50S ribosomal subunit.

Its function is as follows. GTPase that plays an essential role in the late steps of ribosome biogenesis. In Enterococcus faecalis (strain ATCC 700802 / V583), this protein is GTPase Der.